The sequence spans 348 residues: Dehydrogenase orsE (348 aa).

43-46 (LDTH) contacts NADP(+). Substrate is bound at residue 130-137 (FAVEAAVC). NADP(+)-binding positions include 180-183 (SSSV), 203-206 (GAHN), and 272-273 (VH). 292–296 (NDIAT) provides a ligand contact to substrate. 339 to 340 (VS) is a binding site for NADP(+).

It belongs to the zinc-containing alcohol dehydrogenase family. In terms of assembly, monomer.

Functionally, dehydrogenase; part of the gene cluster that mediates the biosynthesis of orsellinic acid, as well as of the cathepsin K inhibitors F9775 A and F9775 B. The non-reducing polyketide synthase orsA produces orsellinic acid by condensing acetyl-CoA with 3 malonyl-CoA units. Further modifications by the decarboxylase orsB and the tyrosinase-like protein orsC lead to the production of F9775 A and F9775 B. The functions of orsD and orsE remain unclear since only orsB and orsC are required to convert orsellinic acid into F9775 A and F9775 B. This is Dehydrogenase orsE from Emericella nidulans (strain FGSC A4 / ATCC 38163 / CBS 112.46 / NRRL 194 / M139) (Aspergillus nidulans).